The primary structure comprises 89 residues: Small ribosomal subunit protein uS15 (89 aa).

Residues 1–25 (MSLDTTEKQQLINTHQTHGTDTGSA) are disordered. Residues 8–25 (KQQLINTHQTHGTDTGSA) show a composition bias toward polar residues.

Belongs to the universal ribosomal protein uS15 family. As to quaternary structure, part of the 30S ribosomal subunit. Forms a bridge to the 50S subunit in the 70S ribosome, contacting the 23S rRNA.

One of the primary rRNA binding proteins, it binds directly to 16S rRNA where it helps nucleate assembly of the platform of the 30S subunit by binding and bridging several RNA helices of the 16S rRNA. Its function is as follows. Forms an intersubunit bridge (bridge B4) with the 23S rRNA of the 50S subunit in the ribosome. The polypeptide is Small ribosomal subunit protein uS15 (Synechococcus sp. (strain CC9902)).